The sequence spans 216 residues: ATP-dependent Clp protease proteolytic subunit (216 aa).

S101 (nucleophile) is an active-site residue. The active site involves H126.

It belongs to the peptidase S14 family. In terms of assembly, component of the chloroplastic Clp protease core complex.

It is found in the plastid. The protein resides in the chloroplast stroma. It catalyses the reaction Hydrolysis of proteins to small peptides in the presence of ATP and magnesium. alpha-casein is the usual test substrate. In the absence of ATP, only oligopeptides shorter than five residues are hydrolyzed (such as succinyl-Leu-Tyr-|-NHMec, and Leu-Tyr-Leu-|-Tyr-Trp, in which cleavage of the -Tyr-|-Leu- and -Tyr-|-Trp bonds also occurs).. Its function is as follows. Cleaves peptides in various proteins in a process that requires ATP hydrolysis. Has a chymotrypsin-like activity. Plays a major role in the degradation of misfolded proteins. This chain is ATP-dependent Clp protease proteolytic subunit, found in Zea mays (Maize).